The chain runs to 173 residues: Ribosome maturation factor RimM (173 aa).

The region spanning 90–169 (EDEYFWFDIL…RIDTKGAQDI (80 aa)) is the PRC barrel domain.

It belongs to the RimM family. In terms of assembly, binds ribosomal protein uS19.

Its subcellular location is the cytoplasm. Its function is as follows. An accessory protein needed during the final step in the assembly of 30S ribosomal subunit, possibly for assembly of the head region. Essential for efficient processing of 16S rRNA. May be needed both before and after RbfA during the maturation of 16S rRNA. It has affinity for free ribosomal 30S subunits but not for 70S ribosomes. This chain is Ribosome maturation factor RimM, found in Nitratiruptor sp. (strain SB155-2).